Here is a 470-residue protein sequence, read N- to C-terminus: tRNA-2-methylthio-N(6)-dimethylallyladenosine synthase (470 aa).

In terms of domain architecture, MTTase N-terminal spans 1–116 (MTYTVRTYGC…LPALLRRSRH (116 aa)). [4Fe-4S] cluster-binding residues include Cys10, Cys45, Cys79, Cys153, Cys157, and Cys160. Residues 139 to 369 (RESNYSAWVS…LDLQNRIALE (231 aa)) enclose the Radical SAM core domain. The 68-residue stretch at 372–439 (RKLIGKEVEL…PYHLIGDNAL (68 aa)) folds into the TRAM domain.

The protein belongs to the methylthiotransferase family. MiaB subfamily. As to quaternary structure, monomer. [4Fe-4S] cluster serves as cofactor.

The protein resides in the cytoplasm. It carries out the reaction N(6)-dimethylallyladenosine(37) in tRNA + (sulfur carrier)-SH + AH2 + 2 S-adenosyl-L-methionine = 2-methylsulfanyl-N(6)-dimethylallyladenosine(37) in tRNA + (sulfur carrier)-H + 5'-deoxyadenosine + L-methionine + A + S-adenosyl-L-homocysteine + 2 H(+). Its function is as follows. Catalyzes the methylthiolation of N6-(dimethylallyl)adenosine (i(6)A), leading to the formation of 2-methylthio-N6-(dimethylallyl)adenosine (ms(2)i(6)A) at position 37 in tRNAs that read codons beginning with uridine. The protein is tRNA-2-methylthio-N(6)-dimethylallyladenosine synthase of Tropheryma whipplei (strain Twist) (Whipple's bacillus).